The primary structure comprises 385 residues: 2-oxoglutarate-dependent dioxygenase AFUA_1G01000 (385 aa).

The 125-residue stretch at 203-327 (PSDDFLRLLR…RYSVLVGTRP (125 aa)) folds into the Fe2OG dioxygenase domain. 3 residues coordinate Fe cation: histidine 230, aspartate 232, and histidine 304. Arginine 318 is a 2-oxoglutarate binding site.

The protein belongs to the iron/ascorbate-dependent oxidoreductase family. Fe(2+) serves as cofactor.

In terms of biological role, 2-oxoglutarate-dependent dioxygenase; part of the gene cluster that mediates the biosynthesis of fumigermin that inhibits germination of spores of the inducing S.rapamycinicus, and thus helps the fungus to defend resources in the shared habitat against a bacterial competitor. The partially reducing polyketide synthase fngA alone is sufficient for the production of fumigermin. FgnA catalyzes the condensation of 3 malonyl-CoA units to an acetyl-CoA starter, and 3 methylations to yield fumigermin. It is remarkable that the five cluster genes including fgnA are conserved in distantly related fungi, supporting the assumption of a fumigermin cluster; it is thus possible that originally all five genes were functional, but that the genes encoding tailoring enzymes became inactive from mutations, similar to the case of the fgnA gene in strains A1163 and Af293. The chain is 2-oxoglutarate-dependent dioxygenase AFUA_1G01000 from Aspergillus fumigatus (strain ATCC MYA-4609 / CBS 101355 / FGSC A1100 / Af293) (Neosartorya fumigata).